The sequence spans 286 residues: Secretory carrier-associated membrane protein 2 (286 aa).

Basic and acidic residues-rich tracts occupy residues 1–10 (MAGRYDRNPF) and 54–63 (STKDMKKKEK). Positions 1-63 (MAGRYDRNPF…STKDMKKKEK (63 aa)) are disordered. Over 1–126 (MAGRYDRNPF…LQRMQYLAFS (126 aa)) the chain is Cytoplasmic. Residues 52–89 (LDSTKDMKKKEKELQAKEAELNKRESELRRREEAASRA) adopt a coiled-coil conformation. 4 consecutive transmembrane segments (helical) span residues 127 to 147 (SLLG…AAWI), 152 to 172 (VMIW…AYVL), 189 to 209 (FGWF…SAVA), and 237 to 257 (IFYF…VVVI). At 258–286 (QQVYMYFRGSGKAAEMKREAARGAMRSAF) the chain is on the cytoplasmic side.

The protein belongs to the SCAMP family.

It is found in the cell membrane. The protein resides in the cytoplasmic vesicle. The protein localises to the secretory vesicle membrane. Functionally, probably involved in membrane trafficking. In Oryza sativa subsp. japonica (Rice), this protein is Secretory carrier-associated membrane protein 2 (SCAMP2).